The following is a 227-amino-acid chain: 7-cyano-7-deazaguanine synthase (227 aa).

An ATP-binding site is contributed by 8-18 (FSGGQDSTTCL). Residues C187, C196, C199, and C202 each contribute to the Zn(2+) site.

It belongs to the QueC family. Requires Zn(2+) as cofactor.

The enzyme catalyses 7-carboxy-7-deazaguanine + NH4(+) + ATP = 7-cyano-7-deazaguanine + ADP + phosphate + H2O + H(+). Its pathway is purine metabolism; 7-cyano-7-deazaguanine biosynthesis. Catalyzes the ATP-dependent conversion of 7-carboxy-7-deazaguanine (CDG) to 7-cyano-7-deazaguanine (preQ(0)). This chain is 7-cyano-7-deazaguanine synthase, found in Aliivibrio fischeri (strain ATCC 700601 / ES114) (Vibrio fischeri).